A 314-amino-acid chain; its full sequence is MATNKFFKSLLFTLTIAISSFGFCVENSSAYPVFAQQGYSNPRAANGKLACANCHLNQKAIEIEAPQGVLPNSVFEIEIKVPYDVNRQQISADGKPADLNVGGILILPKGFKLASKTQISPEVKAKNKGVFISPYSTEFDNILVVGPIAGKTHQELIFPVVAPDPENNPDVKYLTYPFYAGGNRGRGQVYPTGERSNINSFGATQGGQITEITTTEKGESKITIVNSDGATTSQTLSAGLKLLVKQGDIVKQDQPLNIDPNVGGFGQEESEIVLQSSSRILGYLAFCFCLLLTQVLLVLKKKQYEKVQAAELNF.

The signal sequence occupies residues 1–30 (MATNKFFKSLLFTLTIAISSFGFCVENSSA). Residues Tyr-31, Cys-51, Cys-54, and His-55 each contribute to the heme site. A helical transmembrane segment spans residues 280–300 (ILGYLAFCFCLLLTQVLLVLK).

This sequence belongs to the cytochrome f family. The 4 large subunits of the cytochrome b6-f complex are cytochrome b6, subunit IV (17 kDa polypeptide, petD), cytochrome f and the Rieske protein, while the 4 small subunits are PetG, PetL, PetM and PetN. The complex functions as a dimer. It depends on heme as a cofactor.

It is found in the plastid. The protein resides in the chloroplast thylakoid membrane. In terms of biological role, component of the cytochrome b6-f complex, which mediates electron transfer between photosystem II (PSII) and photosystem I (PSI), cyclic electron flow around PSI, and state transitions. The sequence is that of Cytochrome f from Thalassiosira pseudonana (Marine diatom).